The sequence spans 949 residues: Inactive atromentin synthetase invA3 (949 aa).

The tract at residues 38 to 460 (RAVSQYPNHE…SGRIKDTVVV (423 aa)) is adenylation (A) domain. A Carrier domain is found at 592–670 (ALSTETEKTL…NLAKYVDSLV (79 aa)). The thiolation and peptide carrier (T) domain stretch occupies residues 597 to 667 (TEKTLAGIYA…VISNLAKYVD (71 aa)). Ser629 carries the post-translational modification O-(pantetheine 4'-phosphoryl)serine. Residues 693–934 (PIFMVHPGMA…YTLMDFDHVA (242 aa)) form a thioesterase (TE) domain region.

This sequence belongs to the ATP-dependent AMP-binding enzyme family.

Functionally, inactive atromentin synthetase homolog. While the invA3 adenylation (A) domain is capable of adenylating 4-hydroxyphenylpyruvate (4-HPP), the invA3 enzyme is inactive because of its non-functional thioesterase (TE) domain. This chain is Inactive atromentin synthetase invA3 (invA3), found in Paxillus involutus (Naked brimcap).